The chain runs to 645 residues: Octopamine receptor Oamb (645 aa).

Topologically, residues 1–25 are extracellular; that stretch reads MNETECEDLIKSVKWTEPANLISLA. An N-linked (GlcNAc...) asparagine glycan is attached at N2. A helical transmembrane segment spans residues 26-46; the sequence is VLEFINVLVIGGNCLVIAAVF. The Cytoplasmic portion of the chain corresponds to 47–56; it reads CSNKLRSVTN. Residues 57–77 traverse the membrane as a helical segment; sequence FFIVNLAVADLLVGLAVLPFS. The Extracellular segment spans residues 78–94; it reads ATWEVFKVWIFGDLWCR. C93 and C287 are oxidised to a cystine. Residues 95–115 traverse the membrane as a helical segment; it reads IWLAVDVWMCTASILNLCAIS. Topologically, residues 116-138 are cytoplasmic; it reads LDRYVAVTRPVTYPSIMSTKKAK. A helical membrane pass occupies residues 139–159; the sequence is SLIAGIWVLSFFICFPPLVGW. Residues 160–295 lie on the Extracellular side of the membrane; it reads KDQKAVIQPT…KCELTNDRGY (136 aa). Residue N174 is glycosylated (N-linked (GlcNAc...) asparagine). Positions 190-212 are disordered; sequence QLGLDSIKDQGEASLPPSPPHIG. Residues 296–316 traverse the membrane as a helical segment; sequence VLYSALGSFYIPMFVMLFFYW. Residues 317–520 lie on the Cytoplasmic side of the membrane; the sequence is RIYRAAVRTT…FRMETKAAKT (204 aa). Disordered regions lie at residues 358–386 and 479–500; these read GRGS…PSPE and RQSN…KKMG. Low complexity predominate over residues 369-385; the sequence is SNGSTQSTTTTLGTPSP. A helical transmembrane segment spans residues 521–541; that stretch reads LAIIVGMFIFCWCPFFTMYII. The Extracellular segment spans residues 542 to 551; that stretch reads RPFCQDCVDP. Residues 552–572 form a helical membrane-spanning segment; it reads LLFSVLFWLGYCNSAVNPMIY. Residues 573–645 are Cytoplasmic-facing; that stretch reads ALFSKDFRFA…HHSEMSNDPR (73 aa). The segment at 621 to 645 is disordered; the sequence is TPSAAAHSFGDESELHHSEMSNDPR. The span at 629–645 shows a compositional bias: basic and acidic residues; the sequence is FGDESELHHSEMSNDPR.

This sequence belongs to the G-protein coupled receptor 1 family. In terms of tissue distribution, highly enriched in mushroom body neuropil and in the ellipsoid body (at protein level). Expressed in oviduct epithelium (at protein level). Expressed in the adult and larval brain, thoracic and abdominal ganglia, terminal cells of the larval tracheal system, muscle, mature eggs and reproductive system.

It localises to the cell membrane. Functionally, receptor for octopamine (OA) which is a neurotransmitter, neurohormone and neuromodulator in invertebrates. Stimulates intracellular accumulation of cAMP and Ca(2+) following ligand binding. Required for ovulation. Following activation on mature follicle cells by OA, induces activity of the metalloprotease Mmp2 which leads to breakdown of the posterior follicle wall, resulting in ovulation. Ligand binding probably also leads to activation of CamKII which is also required for ovulation. Modulates sleep/wake behavior by acting in neurons of the pars intercerebralis to promote wakefulness. Plays a role in courtship conditioning where the courtship behavior of males rejected by already mated females is inhibited with further females. Required in the mushroom body for appetitive olfactory learning. Specifically conveys the short-term reinforcing effects of sweet taste. In insulin-producing cells of the brain, plays a role in inhibiting transcription of insulin-like peptide Ilp3. Also plays a role in social behavior by modulating male agression. The sequence is that of Octopamine receptor Oamb from Drosophila melanogaster (Fruit fly).